The primary structure comprises 359 residues: MSKKKVMVGMSGGVDSSVAAAILLEQGYEVIGATMQIWPDTDEETKLVEGGCCSLSAVDDARSVANKLGIPYYVLNFKDIFEKSVINYFKDEYLKGRTPNPCIACNRFVKFESMLNKALSMGIDYIATGHYAIITYDDNKKRYLLKKSVTQQKDQTYALYNVTQEQLKHILMPIGNFTKEQVRAKAKELGLYVASKPDSQEICFVNDNDYGKFIEENTDKEIKPGYFVDTKGNILGKHRGIIHYTVGQRKGLGIALGKPMYVVRIDAENNTVVLGDENEVYSKELTAYDLNFISIDKLEEPMRVKAKIRYSAKEADAVIYPLEDGKVRVVFDTPQRAVTPGQSVVFYDGDIVVGGGIIQ.

Residues 9-16 (GMSGGVDS) and methionine 35 contribute to the ATP site. Residue cysteine 105 is the Nucleophile of the active site. Residues cysteine 105 and cysteine 203 are joined by a disulfide bond. Position 129 (glycine 129) interacts with ATP. Positions 153-155 (KDQ) are interaction with tRNA. Cysteine 203 serves as the catalytic Cysteine persulfide intermediate. The interval 309 to 310 (RY) is interaction with tRNA.

It belongs to the MnmA/TRMU family.

It is found in the cytoplasm. It catalyses the reaction S-sulfanyl-L-cysteinyl-[protein] + uridine(34) in tRNA + AH2 + ATP = 2-thiouridine(34) in tRNA + L-cysteinyl-[protein] + A + AMP + diphosphate + H(+). Its function is as follows. Catalyzes the 2-thiolation of uridine at the wobble position (U34) of tRNA, leading to the formation of s(2)U34. The polypeptide is tRNA-specific 2-thiouridylase MnmA (Acetivibrio thermocellus (strain ATCC 27405 / DSM 1237 / JCM 9322 / NBRC 103400 / NCIMB 10682 / NRRL B-4536 / VPI 7372) (Clostridium thermocellum)).